The chain runs to 386 residues: WD repeat-containing protein 89 (386 aa).

WD repeat units follow at residues 21–65, 68–107, 112–156, 167–207, 213–253, and 318–357; these read KEPT…LLRE, GSPG…EKPV, GYPS…QDLS, THSD…EEDA, NSVS…TDEP, and GHAA…KTFT.

The polypeptide is WD repeat-containing protein 89 (Wdr89) (Mus musculus (Mouse)).